The primary structure comprises 289 residues: Pantothenate synthetase (289 aa).

30-37 contacts ATP; sequence MGNLHEGH. The Proton donor role is filled by histidine 37. A (R)-pantoate-binding site is contributed by glutamine 61. Position 61 (glutamine 61) interacts with beta-alanine. Residue 149–152 participates in ATP binding; the sequence is GEKD. Residue glutamine 155 participates in (R)-pantoate binding. 186–189 lines the ATP pocket; the sequence is MSSR.

It belongs to the pantothenate synthetase family. As to quaternary structure, homodimer.

The protein localises to the cytoplasm. It catalyses the reaction (R)-pantoate + beta-alanine + ATP = (R)-pantothenate + AMP + diphosphate + H(+). It participates in cofactor biosynthesis; (R)-pantothenate biosynthesis; (R)-pantothenate from (R)-pantoate and beta-alanine: step 1/1. Catalyzes the condensation of pantoate with beta-alanine in an ATP-dependent reaction via a pantoyl-adenylate intermediate. This Psychromonas ingrahamii (strain DSM 17664 / CCUG 51855 / 37) protein is Pantothenate synthetase.